We begin with the raw amino-acid sequence, 264 residues long: Secretory carrier-associated membrane protein 4 (264 aa).

Residues 1-33 are disordered; that stretch reads MNRHHDPNPFDEDEEIVNPFSKGGGRVPAASRP. At 1-122 the chain is on the cytoplasmic side; it reads MNRHHDPNPF…AQKLQYLAFA (122 aa). The stretch at 51–85 forms a coiled coil; the sequence is MNDSSQKQRKLADWEAELRKKEMDIKRREEAIAKF. The next 4 membrane-spanning stretches (helical) occupy residues 123–143, 150–170, 185–205, and 233–253; these read SWLGIVLCLVFNVIATMVCWI, IFFLATIYALIGCPLSYVLWY, FGWFFFTYLIHIGFCIVAAIA, and IFYFIGFGLFCLESLLSLWVL. Topologically, residues 254 to 264 are cytoplasmic; that stretch reads QKIYLYFRGNK.

It belongs to the SCAMP family.

It localises to the cell membrane. Its subcellular location is the cytoplasmic vesicle. The protein resides in the secretory vesicle membrane. Functionally, probably involved in membrane trafficking. This is Secretory carrier-associated membrane protein 4 (SCAMP4) from Arabidopsis thaliana (Mouse-ear cress).